The sequence spans 1072 residues: Carbamoyl phosphate synthase large chain (1072 aa).

A carboxyphosphate synthetic domain region spans residues 1–401 (MPKYKDINKV…SLLKAVRSLE (401 aa)). The ATP site is built by R129, R169, G175, G176, K208, L210, E215, G241, V242, H243, Q284, and E298. One can recognise an ATP-grasp 1 domain in the interval 133-327 (KRKMQEIGEP…IAKIAAKIAI (195 aa)). Mg(2+) is bound by residues Q284, E298, and N300. Mn(2+) contacts are provided by Q284, E298, and N300. The oligomerization domain stretch occupies residues 402 to 544 (IKAYGLRLNN…YIYSTYGEED (143 aa)). Residues 545-929 (EVEIHDMPKV…ALYKALEGAG (385 aa)) form a carbamoyl phosphate synthetic domain region. Residues 671–861 (SKLLRELNIN…MVKLAVEVAL (191 aa)) form the ATP-grasp 2 domain. Residues R707, K746, I748, E752, G777, V778, H779, S780, Q820, and E832 each contribute to the ATP site. The Mg(2+) site is built by Q820, E832, and N834. Mn(2+) is bound by residues Q820, E832, and N834. The 143-residue stretch at 930–1072 (LKIPKKGKIL…QKDNVKNLVL (143 aa)) folds into the MGS-like domain. The allosteric domain stretch occupies residues 930 to 1072 (LKIPKKGKIL…QKDNVKNLVL (143 aa)).

Belongs to the CarB family. In terms of assembly, composed of two chains; the small (or glutamine) chain promotes the hydrolysis of glutamine to ammonia, which is used by the large (or ammonia) chain to synthesize carbamoyl phosphate. Tetramer of heterodimers (alpha,beta)4. The cofactor is Mg(2+). It depends on Mn(2+) as a cofactor.

It catalyses the reaction hydrogencarbonate + L-glutamine + 2 ATP + H2O = carbamoyl phosphate + L-glutamate + 2 ADP + phosphate + 2 H(+). The catalysed reaction is hydrogencarbonate + NH4(+) + 2 ATP = carbamoyl phosphate + 2 ADP + phosphate + 2 H(+). The protein operates within amino-acid biosynthesis; L-arginine biosynthesis; carbamoyl phosphate from bicarbonate: step 1/1. It participates in pyrimidine metabolism; UMP biosynthesis via de novo pathway; (S)-dihydroorotate from bicarbonate: step 1/3. Large subunit of the glutamine-dependent carbamoyl phosphate synthetase (CPSase). CPSase catalyzes the formation of carbamoyl phosphate from the ammonia moiety of glutamine, carbonate, and phosphate donated by ATP, constituting the first step of 2 biosynthetic pathways, one leading to arginine and/or urea and the other to pyrimidine nucleotides. The large subunit (synthetase) binds the substrates ammonia (free or transferred from glutamine from the small subunit), hydrogencarbonate and ATP and carries out an ATP-coupled ligase reaction, activating hydrogencarbonate by forming carboxy phosphate which reacts with ammonia to form carbamoyl phosphate. This is Carbamoyl phosphate synthase large chain from Thermoanaerobacter pseudethanolicus (strain ATCC 33223 / 39E) (Clostridium thermohydrosulfuricum).